The chain runs to 607 residues: MTTVIRYGTRLEHLHEAVKLSPHGQTALSVWINDDIRPLPPSRRTWSTMTFIGWWSVWQLSLTNWQLGGSLVASSLSVWQTMVAVVLGRTIAAIVAILIGYIGAEWHIGFPVYSRAIWGVFPYSCHRTVPRQSNVGVILKGAFFPTLLRIGLTVVGFAFQSYTGGLCVTAILSGIFPTFFRMSNTLPASAHVTTQQIIGWAIFNIISIPVLYRRPERSEKLMIGMNIMSFAALLGIMIWSLSHAHGAGDLIHQPSQLQTSDSLGFGIMQGITTVVGTLSIALSRSPFVYPYLKYVSDLDSASQMDFSRFARKPSDQVFGQWFTFIIIGSIMPLFGCLTSSATQAIYGEALWNPPTILAISTSRAAAVFAGIGLVSSQLALNVVDNGKSSPSQSVKGFSNYPVGYSVGMDLSGLLPKYINIRRGCYVGLILGMALCPWELLASATTFVSVISSFSIFMAPFCGIHISDYWFIRQRRLKLSDLYHARPEGIYFYTMGFNWRGVLPWLVGWVPLLPGFMHSINPAIKVSVGADHLYALGFPYGLLSSMAIHTLVNKCFPPPGIGEIDRDDTYGTFTVEEAAKLGVNKDSTEEDSDRSLRRESREVVETKV.

The next 12 helical transmembrane spans lie at 67-87 (LGGS…AVVL), 91-111 (IAAI…IGFP), 152-172 (LTVV…TAIL), 192-212 (VTTQ…PVLY), 221-241 (LMIG…IWSL), 262-282 (SLGF…SIAL), 317-337 (VFGQ…FGCL), 364-384 (AAAV…NVVD), 423-443 (GCYV…LASA), 445-465 (TFVS…GIHI), 500-520 (GVLP…HSIN), and 531-551 (HLYA…HTLV). A disordered region spans residues 583 to 607 (NKDSTEEDSDRSLRRESREVVETKV). Over residues 592 to 607 (DRSLRRESREVVETKV) the composition is skewed to basic and acidic residues.

It belongs to the purine-cytosine permease (2.A.39) family.

The protein resides in the membrane. Its function is as follows. Transporter; part of the gene cluster that mediates the biosynthesis of aspirochlorine (or antibiotic A30641), an unusual halogenated spiro compound with distinctive antifungal properties due to selective inhibition of protein biosynthesis, and which is also active against bacteria, viruses, and murine tumor cells. The chain is Transporter aclS from Aspergillus oryzae (strain ATCC 42149 / RIB 40) (Yellow koji mold).